Here is a 1827-residue protein sequence, read N- to C-terminus: Sucrase-isomaltase, intestinal (1827 aa).

The Cytoplasmic segment spans residues 2 to 12; the sequence is ARKKFSGLEIS. S7 bears the Phosphoserine; by PKA mark. Residues 13 to 32 form a helical; Signal-anchor for type II membrane protein membrane-spanning segment; sequence LIVLFVIVTIIAIALIVVLA. Residues 33–1827 are Lumenal-facing; the sequence is TKTPAVDEIS…LEEPIEINWS (1795 aa). The tract at residues 40-61 is disordered; it reads EISDSTSTPATTRVTTNPSDSG. The segment covering 45–55 has biased composition (low complexity); sequence TSTPATTRVTT. The 50-residue stretch at 61–110 folds into the P-type 1 domain; sequence GKCPNVLNDPVNVRINCIPEQFPTEGICAQRGCCWRPWNDSLIPWCFFVD. 3 cysteine pairs are disulfide-bonded: C63–C94, C77–C93, and C88–C106. The N-linked (GlcNAc...) asparagine glycan is linked to N99. The isomaltase stretch occupies residues 110-1007; that stretch reads DNHGYNVQDM…DLQLNTANAR (898 aa). A sulfotyrosine mark is found at Y237 and Y239. Substrate is bound by residues D264 and D388. Y391 and Y400 each carry sulfotyrosine. Residues N437 and N455 are each glycosylated (N-linked (GlcNAc...) asparagine). The active-site Nucleophile; for isomaltase activity is the D505. C520 and C545 are disulfide-bonded. R588 contributes to the substrate binding site. The For isomaltase activity role is filled by D604. C635 and C646 form a disulfide bridge. H662 lines the substrate pocket. 3 positions are modified to sulfotyrosine: Y667, Y763, and Y765. N823, N855, N904, and N926 each carry an N-linked (GlcNAc...) asparagine glycan. Residues 932–978 form the P-type 2 domain; sequence NQIFSENERFNCYPDADLATEQKCTQRGCVWRTGSSLSKAPECYFPR. The segment at 1008–1827 is sucrase; that stretch reads IKLPSDPIST…LEEPIEINWS (820 aa). N1235, N1303, N1340, and N1354 each carry an N-linked (GlcNAc...) asparagine glycan. The active-site Nucleophile; for sucrase activity is the D1394. E1397 acts as the For sucrase activity in catalysis. A glycan (N-linked (GlcNAc...) asparagine) is linked at N1403. D1500 functions as the Proton donor; for isomaltase activity in the catalytic mechanism. Residues N1535, N1572, N1675, N1748, N1763, and N1815 are each glycosylated (N-linked (GlcNAc...) asparagine).

Belongs to the glycosyl hydrolase 31 family. The resulting sucrase and isomaltase subunits stay associated with one another in a complex by non-covalent linkages. In terms of processing, the precursor is proteolytically cleaved when exposed to pancreatic proteases in the intestinal lumen. Post-translationally, sulfated. As to expression, expressed in the poorly differentiated crypt cells of the small intestine as well as in the mature villous cells. Expressed at very low levels in the colon.

The protein localises to the apical cell membrane. It carries out the reaction Hydrolysis of sucrose and maltose by an alpha-D-glucosidase-type action.. The enzyme catalyses Hydrolysis of (1-&gt;6)-alpha-D-glucosidic linkages in some oligosaccharides produced from starch and glycogen by alpha-amylase, and in isomaltose.. In terms of biological role, plays an important role in the final stage of carbohydrate digestion. Isomaltase activity is specific for both alpha-1,4- and alpha-1,6-oligosaccharides. The sequence is that of Sucrase-isomaltase, intestinal (SI) from Homo sapiens (Human).